The following is a 466-amino-acid chain: F-box/WD repeat-containing protein 15 (466 aa).

The F-box domain maps to 1–45 (MAIHLPCLPMMKILSYLDAYSLLQAAQVNKDWNELASSDVLWRKL). WD repeat units lie at residues 101–143 (GYAC…ITWK), 146–185 (EQPA…ALAT), 187–228 (NLKS…LIST), 339–379 (LQCH…KTFQ), and 381–419 (CPEM…LRKC).

As to quaternary structure, part of an SCF (SKP1-CUL1-F-box protein) E3 ubiquitin-protein ligase complex. Interacts with KAT7 and SKP1. Specifically expressed in oocytes from follicles of the medullary region of the ovary.

The protein resides in the cytoplasm. It localises to the cytosol. It is found in the endoplasmic reticulum. Its subcellular location is the nucleus. The protein operates within protein modification; protein ubiquitination. In terms of biological role, substrate-recognition component of an SCF (SKP1-CUL1-F-box protein)-type E3 ubiquitin ligase complex. Promotes KAT7 ubiquitination and subsequent degradation in collaboration with MAP2K1 kinase, leading to reduced histone H3K14 acetylation and increased cell proliferation. The protein is F-box/WD repeat-containing protein 15 of Mus musculus (Mouse).